A 338-amino-acid polypeptide reads, in one-letter code: Lipoate-protein ligase A (338 aa).

The BPL/LPL catalytic domain occupies 29–216 (PATQRVLFLW…AFFAHYGERV (188 aa)). Residues Arg-71, 76-79 (GAVF), and Lys-134 contribute to the ATP site. Residue Lys-134 coordinates (R)-lipoate.

Belongs to the LplA family. As to quaternary structure, monomer.

Its subcellular location is the cytoplasm. It catalyses the reaction L-lysyl-[lipoyl-carrier protein] + (R)-lipoate + ATP = N(6)-[(R)-lipoyl]-L-lysyl-[lipoyl-carrier protein] + AMP + diphosphate + H(+). The protein operates within protein modification; protein lipoylation via exogenous pathway; protein N(6)-(lipoyl)lysine from lipoate: step 1/2. It participates in protein modification; protein lipoylation via exogenous pathway; protein N(6)-(lipoyl)lysine from lipoate: step 2/2. Catalyzes both the ATP-dependent activation of exogenously supplied lipoate to lipoyl-AMP and the transfer of the activated lipoyl onto the lipoyl domains of lipoate-dependent enzymes. The chain is Lipoate-protein ligase A from Salmonella schwarzengrund (strain CVM19633).